Reading from the N-terminus, the 392-residue chain is Putative pectate lyase 21 (392 aa).

The N-terminal stretch at 1–21 (MSIVCTFFLFLLNTSFAFAFA) is a signal peptide. Asn-38 carries N-linked (GlcNAc...) asparagine glycosylation. Ca(2+) is bound by residues Asp-189, Asp-213, and Asp-217. An N-linked (GlcNAc...) asparagine glycan is attached at Asn-220. Arg-269 is an active-site residue.

The protein belongs to the polysaccharide lyase 1 family. Requires Ca(2+) as cofactor.

The enzyme catalyses Eliminative cleavage of (1-&gt;4)-alpha-D-galacturonan to give oligosaccharides with 4-deoxy-alpha-D-galact-4-enuronosyl groups at their non-reducing ends.. It participates in glycan metabolism; pectin degradation; 2-dehydro-3-deoxy-D-gluconate from pectin: step 2/5. The polypeptide is Putative pectate lyase 21 (Arabidopsis thaliana (Mouse-ear cress)).